The following is a 102-amino-acid chain: Glycoprotein 24A (102 aa).

This sequence belongs to the csb family. O-glycosylated.

It is found in the cell surface. Its function is as follows. Cell-cell adhesion during early development. This chain is Glycoprotein 24A (csbA), found in Dictyostelium discoideum (Social amoeba).